Here is a 462-residue protein sequence, read N- to C-terminus: MSAAKLPKSFVWGYATAAYQIEGSPDKDGREPSIWDTFCKAPGKIADGSSGDVATDSYNRWREDVQLLKSYGVKAYRFSLSWSRIIPKGGRSDPVNGAGIKHYRTLIEELVKEGITPFVTLYHWDLPQALDDRYGGWLNKEEAIQDFTNYAKLCFESFGDLVQNWITFNEPWVISVMGYGNGIFAPGHVSNTEPWIVSHHIILAHAHAVKLYRDEFKEKQGGQIGITLDSHWLIPYDDTDASKEATLRAMEFKLGRFANPIYKGEYPPRIKKILGDRLPEFTPEEIELVKGSSDFFGLNTYTTHLVQDGGSDELAGFVKTGHTRADGTQLGTQSDMGWLQTYGPGFRWLLNYLWKAYDKPVYVTENGFPVKGENDLPVEQAVDDTDRQAYYRDYTEALLQAVTEDGADVRGYFGWSLLDNFEWAEGYKVRFGVTHVDYETQKRTPKKSAEFLSRWFKEHIEE.

Residues glutamine 20, histidine 123, and asparagine 169 each coordinate substrate. Glutamate 170 acts as the Proton donor in catalysis. Tyrosine 301 lines the substrate pocket. Catalysis depends on glutamate 365, which acts as the Nucleophile. Substrate-binding positions include tryptophan 415 and glutamate 422 to tryptophan 423.

This sequence belongs to the glycosyl hydrolase 1 family.

The enzyme catalyses Hydrolysis of terminal, non-reducing beta-D-glucosyl residues with release of beta-D-glucose.. In terms of biological role, plays an important role in cellulose degradation. Shows hydrolytic activity against several glycosidic compounds. This chain is Beta-glucosidase 1A, found in Phanerodontia chrysosporium (White-rot fungus).